The sequence spans 250 residues: Geranylgeranylglyceryl phosphate synthase (250 aa).

Mg(2+) is bound by residues Asp23 and Ser52. Sn-glycerol 1-phosphate is bound by residues 170–176 (YIEAGSG), 202–203 (GG), and 224–225 (GT).

Belongs to the GGGP/HepGP synthase family. Group II subfamily. Requires Mg(2+) as cofactor.

It localises to the cytoplasm. It catalyses the reaction sn-glycerol 1-phosphate + (2E,6E,10E)-geranylgeranyl diphosphate = sn-3-O-(geranylgeranyl)glycerol 1-phosphate + diphosphate. It participates in membrane lipid metabolism; glycerophospholipid metabolism. In terms of biological role, prenyltransferase that catalyzes the transfer of the geranylgeranyl moiety of geranylgeranyl diphosphate (GGPP) to the C3 hydroxyl of sn-glycerol-1-phosphate (G1P). This reaction is the first ether-bond-formation step in the biosynthesis of archaeal membrane lipids. The sequence is that of Geranylgeranylglyceryl phosphate synthase from Methanobrevibacter smithii (strain ATCC 35061 / DSM 861 / OCM 144 / PS).